A 247-amino-acid polypeptide reads, in one-letter code: Synaptogyrin homolog 1 (247 aa).

An MARVEL domain is found at 21-175 (FFKKPTVLFR…AAFFAWRRYE (155 aa)). 4 helical membrane passes run 25 to 45 (PTVL…YSVS), 69 to 89 (CSFA…LIVL), 105 to 125 (AVLA…IGFF), and 151 to 171 (FGIL…FFAW). The disordered stretch occupies residues 206-247 (DSTGIGHVGAPPPQSSYQSGAAPQTMQQPPSNPYTQSEGYGY). Residues 220 to 247 (SSYQSGAAPQTMQQPPSNPYTQSEGYGY) show a composition bias toward polar residues.

This sequence belongs to the synaptogyrin family. As to expression, expressed in a wide variety of neurons and is expressed weakly in the non-neuronal distal tip cells. A punctate pattern was observed in the ventral and dorsal nerve cords and the nerve ring. Weak expression is seen in neuronal cell bodies and commissures.

It localises to the membrane. This Caenorhabditis elegans protein is Synaptogyrin homolog 1 (sng-1).